Here is a 710-residue protein sequence, read N- to C-terminus: Homeobox-leucine zipper protein ROC8 (710 aa).

The interval 1-23 (MDFGDEPEGSDSQRRRKRYHRHT) is disordered. The span at 14-23 (RRRKRYHRHT) shows a compositional bias: basic residues. The homeobox DNA-binding region spans 15 to 74 (RRKRYHRHTPRQIQQLEAMFKECPHPDENQRAQLSRELGLEPRQIKFWFQNRRTQMKAQH). Positions 82-144 (LRAENDKIRC…DRVSNLTSKY (63 aa)) form a coiled coil. Residues 197–440 (SDMERPMMAE…LQRACERYAS (244 aa)) form the START domain. Residues 630-648 (RPGSAAGASTSSAGPLAAA) are compositionally biased toward low complexity. Positions 630 to 650 (RPGSAAGASTSSAGPLAAARG) are disordered.

It belongs to the HD-ZIP homeobox family. Class IV subfamily.

The protein resides in the nucleus. In terms of biological role, probable transcription factor. The sequence is that of Homeobox-leucine zipper protein ROC8 (ROC8) from Oryza sativa subsp. japonica (Rice).